We begin with the raw amino-acid sequence, 333 residues long: Ornithine carbamoyltransferase (333 aa).

Residues 56–59, R107, and 134–137 contribute to the carbamoyl phosphate site; these read STRT and HPTQ. Residues N167, D231, and 235 to 236 each bind L-ornithine; that span reads SM. Residues 273–274 and R318 contribute to the carbamoyl phosphate site; that span reads CL.

This sequence belongs to the aspartate/ornithine carbamoyltransferase superfamily. OTCase family.

The protein resides in the cytoplasm. The catalysed reaction is carbamoyl phosphate + L-ornithine = L-citrulline + phosphate + H(+). It functions in the pathway amino-acid degradation; L-arginine degradation via ADI pathway; carbamoyl phosphate from L-arginine: step 2/2. Functionally, reversibly catalyzes the transfer of the carbamoyl group from carbamoyl phosphate (CP) to the N(epsilon) atom of ornithine (ORN) to produce L-citrulline. The chain is Ornithine carbamoyltransferase from Clostridium botulinum (strain Kyoto / Type A2).